The primary structure comprises 585 residues: Aspartate--tRNA ligase (585 aa).

Glutamate 169 serves as a coordination point for L-aspartate. The interval 193 to 196 (QLFK) is aspartate. Residue arginine 215 participates in L-aspartate binding. ATP contacts are provided by residues 215-217 (RDE) and glutamine 224. Position 443 (histidine 443) interacts with L-aspartate. Glutamate 478 contributes to the ATP binding site. An L-aspartate-binding site is contributed by arginine 485. 530–533 (GLDR) lines the ATP pocket.

It belongs to the class-II aminoacyl-tRNA synthetase family. Type 1 subfamily. Homodimer.

The protein localises to the cytoplasm. The enzyme catalyses tRNA(Asp) + L-aspartate + ATP = L-aspartyl-tRNA(Asp) + AMP + diphosphate. In terms of biological role, catalyzes the attachment of L-aspartate to tRNA(Asp) in a two-step reaction: L-aspartate is first activated by ATP to form Asp-AMP and then transferred to the acceptor end of tRNA(Asp). The sequence is that of Aspartate--tRNA ligase from Pseudothermotoga lettingae (strain ATCC BAA-301 / DSM 14385 / NBRC 107922 / TMO) (Thermotoga lettingae).